A 313-amino-acid chain; its full sequence is Aspartate carbamoyltransferase catalytic subunit (313 aa).

Carbamoyl phosphate is bound by residues R51 and T52. K80 lines the L-aspartate pocket. Carbamoyl phosphate contacts are provided by R101, H129, and Q132. L-aspartate is bound by residues R162 and R224. Residues L263 and P264 each coordinate carbamoyl phosphate.

This sequence belongs to the aspartate/ornithine carbamoyltransferase superfamily. ATCase family. In terms of assembly, heterododecamer (2C3:3R2) of six catalytic PyrB chains organized as two trimers (C3), and six regulatory PyrI chains organized as three dimers (R2).

It carries out the reaction carbamoyl phosphate + L-aspartate = N-carbamoyl-L-aspartate + phosphate + H(+). Its pathway is pyrimidine metabolism; UMP biosynthesis via de novo pathway; (S)-dihydroorotate from bicarbonate: step 2/3. In terms of biological role, catalyzes the condensation of carbamoyl phosphate and aspartate to form carbamoyl aspartate and inorganic phosphate, the committed step in the de novo pyrimidine nucleotide biosynthesis pathway. This Bacteroides thetaiotaomicron (strain ATCC 29148 / DSM 2079 / JCM 5827 / CCUG 10774 / NCTC 10582 / VPI-5482 / E50) protein is Aspartate carbamoyltransferase catalytic subunit.